The sequence spans 465 residues: Cysteine--tRNA ligase (465 aa).

Residue Cys-30 coordinates Zn(2+). A 'HIGH' region motif is present at residues 32–42; the sequence is PTVYDRAHLGN. Zn(2+)-binding residues include Cys-213, His-238, and Glu-242. The 'KMSKS' region motif lies at 271 to 275; that stretch reads KMSKS. Position 274 (Lys-274) interacts with ATP.

The protein belongs to the class-I aminoacyl-tRNA synthetase family. In terms of assembly, monomer. It depends on Zn(2+) as a cofactor.

The protein resides in the cytoplasm. The enzyme catalyses tRNA(Cys) + L-cysteine + ATP = L-cysteinyl-tRNA(Cys) + AMP + diphosphate. This is Cysteine--tRNA ligase from Ruegeria pomeroyi (strain ATCC 700808 / DSM 15171 / DSS-3) (Silicibacter pomeroyi).